An 809-amino-acid polypeptide reads, in one-letter code: Interleukin-4 receptor subunit alpha (809 aa).

The N-terminal stretch at methionine 1–serine 25 is a signal peptide. Residues valine 26 to arginine 231 lie on the Extracellular side of the membrane. An intrachain disulfide couples cysteine 34 to cysteine 44. 2 N-linked (GlcNAc...) asparagine glycosylation sites follow: asparagine 53 and asparagine 71. Cysteine 74 and cysteine 86 are disulfide-bonded. Asparagine 112, asparagine 128, and asparagine 161 each carry an N-linked (GlcNAc...) asparagine glycan. The Fibronectin type-III domain maps to alanine 125–asparagine 222. A Phosphoserine modification is found at serine 163. 2 N-linked (GlcNAc...) asparagine glycosylation sites follow: asparagine 175 and asparagine 208. Residues tryptophan 211 to serine 215 carry the WSXWS motif motif. Residues leucine 232–isoleucine 255 form a helical membrane-spanning segment. Over lysine 256–serine 809 the chain is Cytoplasmic. A Box 1 motif motif is present at residues tryptophan 261–alanine 269. Disordered stretches follow at residues glutamate 369–arginine 397 and serine 441–glutamine 468. The segment covering alanine 447–glutamine 468 has biased composition (polar residues). Phosphotyrosine is present on tyrosine 488. The segment at leucine 514–proline 536 is disordered. Residues tyrosine 566, tyrosine 590, and tyrosine 618 each carry the phosphotyrosine modification. Residues glutamine 606 to arginine 674 are disordered. An ITIM motif motif is present at residues isoleucine 695–leucine 700.

The protein belongs to the type I cytokine receptor family. Type 4 subfamily. As to quaternary structure, the functional IL4 receptor is formed by initial binding of IL4 to IL4R. Subsequent recruitment to the complex of the common gamma chain, in immune cells, creates a type I receptor and, in non-immune cells, of IL13RA1 forms a type II receptor. IL4R can also interact with the IL13/IL13RA1 complex to form a similar type II receptor. Interacts with PIK3C3. Interacts with the SH2-containing phosphatases, PTPN6/SHIP1, PTPN11/SHIP2 and INPP5D/SHIP. Interacts with JAK1 through a Box 1-containing region; inhibited by SOCS5. Interacts with SOCS5; inhibits IL4 signaling. Interacts with JAK3. Interacts with CLM1. Interacts with IL13RA2. Post-translationally, on IL4 binding, phosphorylated on tyrosine residues in the cytoplasmic domain.

It is found in the cell membrane. Its subcellular location is the secreted. Functionally, receptor for both interleukin 4 and interleukin 13. Couples to the JAK1/2/3-STAT6 pathway. The IL4 response is involved in promoting Th2 differentiation. The IL4/IL13 responses are involved in regulating IgE production and, chemokine and mucus production at sites of allergic inflammation. In certain cell types, can signal through activation of insulin receptor substrates, IRS1/IRS2. This Equus caballus (Horse) protein is Interleukin-4 receptor subunit alpha (IL4R).